Here is a 252-residue protein sequence, read N- to C-terminus: Urease accessory protein UreH (252 aa).

It belongs to the UreD family. As to quaternary structure, ureH, UreF and UreG form a complex that acts as a GTP-hydrolysis-dependent molecular chaperone, activating the urease apoprotein by helping to assemble the nickel containing metallocenter of UreC. The UreE protein probably delivers the nickel.

The protein localises to the cytoplasm. Functionally, required for maturation of urease via the functional incorporation of the urease nickel metallocenter. The chain is Urease accessory protein UreH from Helicobacter hepaticus (strain ATCC 51449 / 3B1).